The chain runs to 178 residues: PRA1 family protein 2 (178 aa).

Topologically, residues 1–41 (MSEVRLPPLRALDDFVLGSARLVAPDPCDPQRWCHRVINNL) are cytoplasmic. A helical membrane pass occupies residues 42–62 (LYYQTNYLICFGLGLALAGYV). The Extracellular segment spans residues 63-64 (RP). Residues 65–85 (LHTLLSALVVAVALGMLVCAA) form a helical membrane-spanning segment. The Cytoplasmic segment spans residues 86–96 (ENRAAVRRCRR). A helical transmembrane segment spans residues 97–119 (SHPAACLAAVLAVGFLVLWAAGG). The Extracellular segment spans residues 120 to 122 (AGT). A helical membrane pass occupies residues 123-140 (FLLSIAGPVLLILVHASL). At 141–178 (RLRNLKNKIENKIESIGLKRTPMGLLLEALGQEQEAGS) the chain is on the cytoplasmic side.

This sequence belongs to the PRA1 family. In terms of assembly, interacts with CCR5 and GDE1.

The protein localises to the endosome membrane. Functionally, may be involved in ER/Golgi transport and vesicular traffic. Plays a proapoptotic role in cerulenin-induced neuroblastoma apoptosis. In Bos taurus (Bovine), this protein is PRA1 family protein 2 (PRAF2).